The following is an 82-amino-acid chain: uncharacterized protein (82 aa).

This is an uncharacterized protein from Methanocaldococcus jannaschii (strain ATCC 43067 / DSM 2661 / JAL-1 / JCM 10045 / NBRC 100440) (Methanococcus jannaschii).